The following is a 90-amino-acid chain: Probable Fe(2+)-trafficking protein (90 aa).

The protein belongs to the Fe(2+)-trafficking protein family.

In terms of biological role, could be a mediator in iron transactions between iron acquisition and iron-requiring processes, such as synthesis and/or repair of Fe-S clusters in biosynthetic enzymes. The sequence is that of Probable Fe(2+)-trafficking protein from Pseudomonas fluorescens (strain SBW25).